Consider the following 474-residue polypeptide: PRAME family member 10 (474 aa).

Residues 97–124 form an LRR 1; degenerate repeat; it reads RWKLQVLDLRDVDENFWTIWSGARVLSC. The LRR 2; degenerate repeat unit spans residues 179-203; sequence HLCCSKVQNYSMPTSSFRNLLERIY. The stretch at 204–230 is one LRR 3; degenerate repeat; sequence PDSIQELEVWKKCSLNKTGKFAPYLSQ. Residues 231-265 form an LRR 4; degenerate repeat; sequence MSNLRELFLAFGYERELYVSVQWPCIPDLDSPFLC. LRR repeat units follow at residues 266-291, 292-323, 324-342, 348-375, and 376-400; these read LYYP…LRYL, KNPL…SQLK, ELRL…PLGV, AATL…ALSH, and CSQL…LLRH.

Belongs to the PRAME family.

The chain is PRAME family member 10 from Homo sapiens (Human).